Reading from the N-terminus, the 273-residue chain is IMGHMVNAIEQVDEFLNLGANAIEFDIDFDKDGIAQITHHGIPCDCGRKCTKKAIFTEYLDNIRQVTTPDDPKFREQLVLLALDLKLQRISSAKAYRAGEDVAKKLLDHYWQRGNSRARAYILLNIPLVEDYEFIRAFKDTPKNEGYESYNDKVGINFTGNEDLDKIRDVLEILGIHKQVWQADGITSCLARGTERLKEALEKRDTPGYNYINKVYAWTLVRKSIMRRSLRLGVDGVMSNNPDRVIKVLKEKEFADKFRLATYNDNPWEKFRG.

Histidine 4 is an active-site residue. Glutamate 24 and aspartate 26 together coordinate Mg(2+). Histidine 40 acts as the Nucleophile in catalysis. Cystine bridges form between cysteine 44-cysteine 50 and cysteine 46-cysteine 189. Aspartate 84 provides a ligand contact to Mg(2+).

Belongs to the arthropod phospholipase D family. Class II subfamily. Mg(2+) serves as cofactor. As to expression, expressed by the venom gland.

The protein localises to the secreted. It catalyses the reaction an N-(acyl)-sphingosylphosphocholine = an N-(acyl)-sphingosyl-1,3-cyclic phosphate + choline. It carries out the reaction an N-(acyl)-sphingosylphosphoethanolamine = an N-(acyl)-sphingosyl-1,3-cyclic phosphate + ethanolamine. The enzyme catalyses a 1-acyl-sn-glycero-3-phosphocholine = a 1-acyl-sn-glycero-2,3-cyclic phosphate + choline. The catalysed reaction is a 1-acyl-sn-glycero-3-phosphoethanolamine = a 1-acyl-sn-glycero-2,3-cyclic phosphate + ethanolamine. Dermonecrotic toxins cleave the phosphodiester linkage between the phosphate and headgroup of certain phospholipids (sphingolipid and lysolipid substrates), forming an alcohol (often choline) and a cyclic phosphate. This toxin acts on sphingomyelin (SM). It may also act on ceramide phosphoethanolamine (CPE), lysophosphatidylcholine (LPC) and lysophosphatidylethanolamine (LPE), but not on lysophosphatidylserine (LPS), and lysophosphatidylglycerol (LPG). It acts by transphosphatidylation, releasing exclusively cyclic phosphate products as second products. Induces dermonecrosis, hemolysis, increased vascular permeability, edema, inflammatory response, and platelet aggregation. This chain is Dermonecrotic toxin SdSicTox-betaIIB1bxi, found in Sicarius cf. damarensis (strain GJB-2008) (Six-eyed sand spider).